The primary structure comprises 329 residues: Ribosomal protein L11 methyltransferase (329 aa).

Threonine 177, glycine 198, aspartate 220, and asparagine 264 together coordinate S-adenosyl-L-methionine.

It belongs to the methyltransferase superfamily. PrmA family.

It is found in the cytoplasm. It carries out the reaction L-lysyl-[protein] + 3 S-adenosyl-L-methionine = N(6),N(6),N(6)-trimethyl-L-lysyl-[protein] + 3 S-adenosyl-L-homocysteine + 3 H(+). Functionally, methylates ribosomal protein L11. This is Ribosomal protein L11 methyltransferase from Helicobacter pylori (strain J99 / ATCC 700824) (Campylobacter pylori J99).